Here is a 288-residue protein sequence, read N- to C-terminus: Quinate/shikimate dehydrogenase (288 aa).

The substrate site is built by K71 and D107. NAD(+) contacts are provided by residues 132–135, 155–158, K205, 232–235, and G255; these read AGGA, NRRD, and CVYN.

It belongs to the shikimate dehydrogenase family. Homodimer.

The catalysed reaction is L-quinate + NAD(+) = 3-dehydroquinate + NADH + H(+). The enzyme catalyses L-quinate + NADP(+) = 3-dehydroquinate + NADPH + H(+). It catalyses the reaction shikimate + NADP(+) = 3-dehydroshikimate + NADPH + H(+). It carries out the reaction shikimate + NAD(+) = 3-dehydroshikimate + NADH + H(+). The protein operates within metabolic intermediate biosynthesis; chorismate biosynthesis; chorismate from D-erythrose 4-phosphate and phosphoenolpyruvate: step 4/7. Functionally, the actual biological function of YdiB remains unclear, nor is it known whether 3-dehydroshikimate or quinate represents the natural substrate. Catalyzes the reversible NAD-dependent reduction of both 3-dehydroshikimate (DHSA) and 3-dehydroquinate to yield shikimate (SA) and quinate, respectively. It can use both NAD or NADP for catalysis, however it has higher catalytic efficiency with NAD. This Escherichia coli O81 (strain ED1a) protein is Quinate/shikimate dehydrogenase.